A 178-amino-acid polypeptide reads, in one-letter code: ATP synthase subunit delta (178 aa).

The protein belongs to the ATPase delta chain family. In terms of assembly, F-type ATPases have 2 components, F(1) - the catalytic core - and F(0) - the membrane proton channel. F(1) has five subunits: alpha(3), beta(3), gamma(1), delta(1), epsilon(1). F(0) has three main subunits: a(1), b(2) and c(10-14). The alpha and beta chains form an alternating ring which encloses part of the gamma chain. F(1) is attached to F(0) by a central stalk formed by the gamma and epsilon chains, while a peripheral stalk is formed by the delta and b chains.

It localises to the cell membrane. In terms of biological role, f(1)F(0) ATP synthase produces ATP from ADP in the presence of a proton or sodium gradient. F-type ATPases consist of two structural domains, F(1) containing the extramembraneous catalytic core and F(0) containing the membrane proton channel, linked together by a central stalk and a peripheral stalk. During catalysis, ATP synthesis in the catalytic domain of F(1) is coupled via a rotary mechanism of the central stalk subunits to proton translocation. Functionally, this protein is part of the stalk that links CF(0) to CF(1). It either transmits conformational changes from CF(0) to CF(1) or is implicated in proton conduction. The chain is ATP synthase subunit delta from Geobacillus sp. (strain WCH70).